The following is a 207-amino-acid chain: Cyclic di-AMP synthase CdaS (207 aa).

Residues 13–37 (AFKGKIQVYLEQILGDASLILKTLH) are a coiled coil. A DAC domain is found at 63–205 (SFYLQSYIEE…DGVLYPLISP (143 aa)).

This sequence belongs to the adenylate cyclase family. DacB/CdaS subfamily. In terms of assembly, forms dimers and probably also hexamers; the dimer may be active while the hexamer may not be active.

It catalyses the reaction 2 ATP = 3',3'-c-di-AMP + 2 diphosphate. Functionally, one of 3 paralogous diadenylate cyclases (DAC) in this bacteria, catalyzing the condensation of 2 ATP molecules into cyclic di-AMP (c-di-AMP). Upon expression in E.coli leads to c-di-AMP synthesis. Overexpression of the hyperactive mutant (L44F) in the absence of c-di-AMP phosphodiesterase GdpP leads to growth defects in log phase (long curly cell filaments) that disappear upon sporulation; spore formation is normal, showing sporulation is insensitive to the excess c-di-AMP. In B.subtilis c-di-AMP is a second messenger that mediates growth, DNA repair and cell wall homeostasis; it is toxic when present in excess. This Bacillus subtilis (strain 168) protein is Cyclic di-AMP synthase CdaS.